The following is a 493-amino-acid chain: Xaa-Pro dipeptidase (493 aa).

Alanine 2 carries the N-acetylalanine modification. Phosphoserine is present on serine 167. Position 255 (histidine 255) interacts with a dipeptide. Aspartate 276, aspartate 287, and histidine 370 together coordinate Mn(2+). Position 287 (aspartate 287) interacts with a dipeptide. Positions 377 and 398 each coordinate a dipeptide. 2 residues coordinate Mn(2+): glutamate 412 and glutamate 452.

This sequence belongs to the peptidase M24B family. Eukaryotic-type prolidase subfamily. As to quaternary structure, homodimer. Mn(2+) is required as a cofactor.

The catalysed reaction is Xaa-L-Pro dipeptide + H2O = an L-alpha-amino acid + L-proline. Functionally, dipeptidase that catalyzes the hydrolysis of dipeptides with a prolyl (Xaa-Pro) or hydroxyprolyl residue in the C-terminal position. The preferred dipeptide substrate is Gly-Pro, but other Xaa-Pro dipeptides, such as Ala-Pro, Met-Pro, Phe-Pro, Val-Pro and Leu-Pro, can be cleaved. Plays an important role in collagen metabolism because the high level of iminoacids in collagen. The sequence is that of Xaa-Pro dipeptidase (Pepd) from Mus musculus (Mouse).